The following is a 373-amino-acid chain: tRNA-specific 2-thiouridylase MnmA (373 aa).

Residues 12 to 19 (GMSGGVDS) and methionine 38 contribute to the ATP site. The interaction with target base in tRNA stretch occupies residues 98-100 (NPD). Cysteine 103 functions as the Nucleophile in the catalytic mechanism. Cysteine 103 and cysteine 200 are joined by a disulfide. Glycine 127 serves as a coordination point for ATP. The interval 150–152 (KDQ) is interaction with tRNA. Cysteine 200 acts as the Cysteine persulfide intermediate in catalysis. The segment at 312–313 (RY) is interaction with tRNA.

Belongs to the MnmA/TRMU family.

Its subcellular location is the cytoplasm. It catalyses the reaction S-sulfanyl-L-cysteinyl-[protein] + uridine(34) in tRNA + AH2 + ATP = 2-thiouridine(34) in tRNA + L-cysteinyl-[protein] + A + AMP + diphosphate + H(+). Catalyzes the 2-thiolation of uridine at the wobble position (U34) of tRNA, leading to the formation of s(2)U34. The sequence is that of tRNA-specific 2-thiouridylase MnmA from Streptococcus pneumoniae (strain ATCC 700669 / Spain 23F-1).